The following is a 261-amino-acid chain: 5'-nucleotidase SurE (261 aa).

A divalent metal cation is bound by residues Asp-8, Asp-9, Ser-43, and Asn-96.

It belongs to the SurE nucleotidase family. A divalent metal cation is required as a cofactor.

Its subcellular location is the cytoplasm. The enzyme catalyses a ribonucleoside 5'-phosphate + H2O = a ribonucleoside + phosphate. Nucleotidase that shows phosphatase activity on nucleoside 5'-monophosphates. This Cereibacter sphaeroides (strain KD131 / KCTC 12085) (Rhodobacter sphaeroides) protein is 5'-nucleotidase SurE.